The sequence spans 178 residues: Vegetative protein (178 aa).

Disordered stretches follow at residues 67–102 and 138–158; these read AGRR…AAAG and NRRP…DIKL. Positions 76-90 are enriched in low complexity; that stretch reads PAARSAVTAAPAAVG.

This chain is Vegetative protein (vegA), found in Myxococcus xanthus.